Reading from the N-terminus, the 157-residue chain is S-ribosylhomocysteine lyase (157 aa).

Positions 54, 58, and 124 each coordinate Fe cation.

It belongs to the LuxS family. As to quaternary structure, homodimer. It depends on Fe cation as a cofactor.

It carries out the reaction S-(5-deoxy-D-ribos-5-yl)-L-homocysteine = (S)-4,5-dihydroxypentane-2,3-dione + L-homocysteine. Involved in the synthesis of autoinducer 2 (AI-2) which is secreted by bacteria and is used to communicate both the cell density and the metabolic potential of the environment. The regulation of gene expression in response to changes in cell density is called quorum sensing. Catalyzes the transformation of S-ribosylhomocysteine (RHC) to homocysteine (HC) and 4,5-dihydroxy-2,3-pentadione (DPD). The sequence is that of S-ribosylhomocysteine lyase from Levilactobacillus brevis (strain ATCC 367 / BCRC 12310 / CIP 105137 / JCM 1170 / LMG 11437 / NCIMB 947 / NCTC 947) (Lactobacillus brevis).